Reading from the N-terminus, the 253-residue chain is Probable transcriptional regulatory protein RAF_ORF0717 (253 aa).

The tract at residues 1–21 is disordered; sequence MAGHSKFKNIQHRKGAQDKKR.

Belongs to the TACO1 family.

It localises to the cytoplasm. This chain is Probable transcriptional regulatory protein RAF_ORF0717, found in Rickettsia africae (strain ESF-5).